The sequence spans 55 residues: uncharacterized protein (55 aa).

This is an uncharacterized protein from Orgyia pseudotsugata multicapsid polyhedrosis virus (OpMNPV).